We begin with the raw amino-acid sequence, 498 residues long: ATP synthase subunit beta, chloroplastic (498 aa).

172-179 (GGAGVGKT) lines the ATP pocket.

Belongs to the ATPase alpha/beta chains family. F-type ATPases have 2 components, CF(1) - the catalytic core - and CF(0) - the membrane proton channel. CF(1) has five subunits: alpha(3), beta(3), gamma(1), delta(1), epsilon(1). CF(0) has four main subunits: a(1), b(1), b'(1) and c(9-12).

The protein localises to the plastid. Its subcellular location is the chloroplast thylakoid membrane. The catalysed reaction is ATP + H2O + 4 H(+)(in) = ADP + phosphate + 5 H(+)(out). In terms of biological role, produces ATP from ADP in the presence of a proton gradient across the membrane. The catalytic sites are hosted primarily by the beta subunits. The chain is ATP synthase subunit beta, chloroplastic from Cinnamomum camphora (Camphor tree).